The chain runs to 296 residues: Acetylglutamate kinase (296 aa).

Residues 65–66, arginine 87, and asparagine 190 each bind substrate; that span reads GG.

Belongs to the acetylglutamate kinase family. ArgB subfamily.

The protein resides in the cytoplasm. It carries out the reaction N-acetyl-L-glutamate + ATP = N-acetyl-L-glutamyl 5-phosphate + ADP. It functions in the pathway amino-acid biosynthesis; L-arginine biosynthesis; N(2)-acetyl-L-ornithine from L-glutamate: step 2/4. Functionally, catalyzes the ATP-dependent phosphorylation of N-acetyl-L-glutamate. In Moorella thermoacetica (strain ATCC 39073 / JCM 9320), this protein is Acetylglutamate kinase.